The following is a 1711-amino-acid chain: Serine/threonine-protein kinase MRCK beta (1711 aa).

One can recognise a Protein kinase domain in the interval 76–342; the sequence is FEIIKVIGRG…IEDFKKHAFF (267 aa). ATP-binding positions include 82–90 and lysine 105; that span reads IGRGAFGEV. Aspartate 200 acts as the Proton acceptor in catalysis. 2 positions are modified to phosphoserine; by autocatalysis: serine 221 and serine 233. Threonine 239 carries the phosphothreonine; by autocatalysis modification. An AGC-kinase C-terminal domain is found at 343–413; that stretch reads EGLNWENIRN…TTESCFSDRG (71 aa). Threonine 423 is subject to Phosphothreonine. Coiled coils occupy residues 431–815 and 878–939; these read QRDL…AHWE and ELQS…FRAD. The interval 461 to 484 is disordered; it reads LQESTQTVQSLHGSSRALSNSNRD. Residues 463–481 show a composition bias toward polar residues; sequence ESTQTVQSLHGSSRALSNS. Arginine 671 bears the Omega-N-methylarginine mark. Tyrosine 954 carries the post-translational modification Phosphotyrosine. Residues 969 to 1009 form a disordered region; sequence SSASEQETQAPKPEASPSMSVAASEQQEDMARPPQRPSAVP. The Phorbol-ester/DAG-type zinc finger occupies 1025 to 1075; sequence AHQFSIKSFSSPTQCSHCTSLMVGLIRQGYACEVCSFACHVSCKDGAPQVC. Residues 1095–1214 form the PH domain; that stretch reads GTAYKGHVKV…WVGILEGLQS (120 aa). The 274-residue stretch at 1240-1513 folds into the CNH domain; sequence IKAILTAAIV…RPLNSEGTLN (274 aa). Residues 1583–1596 enclose the CRIB domain; the sequence is ISNPTNFNHVAHMG. The interval 1611–1711 is disordered; that stretch reads AVPPSQEERP…EGLEQPACDT (101 aa). A compositionally biased stretch (polar residues) spans 1641-1650; it reads WPSSGGSEPS. A compositionally biased stretch (basic and acidic residues) spans 1664-1675; sequence DFDKEPDSDSTK. A phosphoserine mark is found at serine 1680, serine 1682, serine 1686, serine 1690, and serine 1693.

This sequence belongs to the protein kinase superfamily. AGC Ser/Thr protein kinase family. DMPK subfamily. As to quaternary structure, homodimer and homotetramer via the coiled coil regions. Interacts tightly with GTP-bound but not GDP-bound CDC42. Interacts with TJP1, when in the presence of catalytically active CDC42. Forms a tripartite complex with MYO18A and LURAP1 with the latter acting as an adapter connecting CDC42BPB and MYO18A. LURAP1 binding results in activation of CDC42BPB by abolition of its negative autoregulation. Interacts with STRIP1, STRN3 and SIKE1. Interacts with CPNE4 (via VWFA domain). Interacts with LURAP1. Interacts (via AGC-kinase C-terminal domain) with FAM89B/LRAP25 (via LRR repeat). Forms a tripartite complex with FAM89B/LRAP25 and LIMK1. It depends on Mg(2+) as a cofactor. In terms of processing, proteolytically cleaved by caspases upon apoptosis induction. As to expression, expressed in all tissues examined, with high levels in heart, brain, placenta and lung.

The protein resides in the cytoplasm. Its subcellular location is the cell membrane. It localises to the cell junction. It is found in the cell projection. The protein localises to the lamellipodium. It catalyses the reaction L-seryl-[protein] + ATP = O-phospho-L-seryl-[protein] + ADP + H(+). The catalysed reaction is L-threonyl-[protein] + ATP = O-phospho-L-threonyl-[protein] + ADP + H(+). Its activity is regulated as follows. Maintained in an inactive, closed conformation by an interaction between the kinase domain and the negative autoregulatory C-terminal coiled-coil region. Agonist binding to the phorbol ester binding site disrupts this, releasing the kinase domain to allow N-terminus-mediated dimerization and kinase activation by transautophosphorylation. Inhibited by chelerythrine chloride. Functionally, serine/threonine-protein kinase which is an important downstream effector of CDC42 and plays a role in the regulation of cytoskeleton reorganization and cell migration. Regulates actin cytoskeletal reorganization via phosphorylation of PPP1R12C and MYL9/MLC2. In concert with MYO18A and LURAP1, is involved in modulating lamellar actomyosin retrograde flow that is crucial to cell protrusion and migration. Phosphorylates PPP1R12A. In concert with FAM89B/LRAP25 mediates the targeting of LIMK1 to the lamellipodium resulting in its activation and subsequent phosphorylation of CFL1 which is important for lamellipodial F-actin regulation. The polypeptide is Serine/threonine-protein kinase MRCK beta (Homo sapiens (Human)).